The chain runs to 196 residues: Inosine triphosphate pyrophosphatase 2 (196 aa).

20-25 lines the ITP pocket; it reads TGNDGK. Glutamate 48 contributes to the Mg(2+) binding site. Residues lysine 61, 77–78, lysine 94, 153–156, lysine 177, and 182–183 contribute to the ITP site; these read DT, FGWD, and PR.

It belongs to the HAM1 NTPase family. As to quaternary structure, homodimer. Mg(2+) is required as a cofactor. The cofactor is Mn(2+).

The protein localises to the cytoplasm. The enzyme catalyses ITP + H2O = IMP + diphosphate + H(+). It carries out the reaction dITP + H2O = dIMP + diphosphate + H(+). It catalyses the reaction XTP + H2O = XMP + diphosphate + H(+). Its function is as follows. Pyrophosphatase that hydrolyzes non-canonical purine nucleotides such as inosine triphosphate (ITP), deoxyinosine triphosphate (dITP) or xanthosine 5'-triphosphate (XTP) to their respective monophosphate derivatives. The enzyme does not distinguish between the deoxy- and ribose forms. Probably excludes non-canonical purines from RNA and DNA precursor pools, thus preventing their incorporation into RNA and DNA and avoiding chromosomal lesions. The polypeptide is Inosine triphosphate pyrophosphatase 2 (Trypanosoma cruzi (strain CL Brener)).